Here is a 339-residue protein sequence, read N- to C-terminus: tRNA dimethylallyltransferase (339 aa).

36–43 (GPTGSGKT) provides a ligand contact to ATP. 38-43 (TGSGKT) lines the substrate pocket. Residues 61-64 (DSMQ) form an interaction with substrate tRNA region.

It belongs to the IPP transferase family. As to quaternary structure, monomer. Requires Mg(2+) as cofactor.

The catalysed reaction is adenosine(37) in tRNA + dimethylallyl diphosphate = N(6)-dimethylallyladenosine(37) in tRNA + diphosphate. Its function is as follows. Catalyzes the transfer of a dimethylallyl group onto the adenine at position 37 in tRNAs that read codons beginning with uridine, leading to the formation of N6-(dimethylallyl)adenosine (i(6)A). The sequence is that of tRNA dimethylallyltransferase from Chlamydia trachomatis serovar A (strain ATCC VR-571B / DSM 19440 / HAR-13).